A 160-amino-acid chain; its full sequence is MAHNGVADVQLKAGSAYGMTVAVISASWNADITDQLHEHSIAAAKEAGAQVSEWRVAGALELPVAVAAACKRFDAVVANGCVIQGETEHFRVVCDAVTYGLTRAGMDSGTPVGNGVLTVDTHEQAVDRAGGVDAKEDKGRDAAVAAIHTALVLRQIERGV.

5-amino-6-(D-ribitylamino)uracil is bound by residues Trp-28, 59–61, and 81–83; these read ALE and CVI. 86–87 provides a ligand contact to (2S)-2-hydroxy-3-oxobutyl phosphate; sequence ET. Residue His-89 is the Proton donor of the active site. Asn-114 provides a ligand contact to 5-amino-6-(D-ribitylamino)uracil. Arg-128 contacts (2S)-2-hydroxy-3-oxobutyl phosphate.

This sequence belongs to the DMRL synthase family.

It carries out the reaction (2S)-2-hydroxy-3-oxobutyl phosphate + 5-amino-6-(D-ribitylamino)uracil = 6,7-dimethyl-8-(1-D-ribityl)lumazine + phosphate + 2 H2O + H(+). It participates in cofactor biosynthesis; riboflavin biosynthesis; riboflavin from 2-hydroxy-3-oxobutyl phosphate and 5-amino-6-(D-ribitylamino)uracil: step 1/2. Functionally, catalyzes the formation of 6,7-dimethyl-8-ribityllumazine by condensation of 5-amino-6-(D-ribitylamino)uracil with 3,4-dihydroxy-2-butanone 4-phosphate. This is the penultimate step in the biosynthesis of riboflavin. This is 6,7-dimethyl-8-ribityllumazine synthase from Corynebacterium jeikeium (strain K411).